A 479-amino-acid chain; its full sequence is Glycogen synthase (479 aa).

Lys15 is a binding site for ADP-alpha-D-glucose.

The protein belongs to the glycosyltransferase 1 family. Bacterial/plant glycogen synthase subfamily.

It catalyses the reaction [(1-&gt;4)-alpha-D-glucosyl](n) + ADP-alpha-D-glucose = [(1-&gt;4)-alpha-D-glucosyl](n+1) + ADP + H(+). It functions in the pathway glycan biosynthesis; glycogen biosynthesis. Its function is as follows. Synthesizes alpha-1,4-glucan chains using ADP-glucose. The protein is Glycogen synthase of Acidiphilium cryptum (strain JF-5).